A 521-amino-acid polypeptide reads, in one-letter code: MFLTDGSSLNSLTMTRRMMVGKRVRTRFAPSPTGYLHVGGLRTALYNYLFAKRMDGDFVVRIEDTDQSRKVADAQENLIKTLEWAGLMPDESPLHGGDFGPYLQSERLDIYKKYCEQLLEAGHAYHCFATSEELEENRQLQLKQGLQPKYNRKWLPEDMGGSMPRSEIQKKLDEGVPSVVRMKVPDYVSVWFEDIIRGPIEFDSATIDDQVLMKSDGFPTYHFASVIDDHLMEFTHIIRGEEWLPSMPKHLLLYEFLGWEPPKYAHLPLLLNPDRSKLSKRQGDVSVEDYIRKGYSGEAIVNFVALLGWNQGEGCEQEVYSLQELTERFSLERVGKAGSIFTIDKLNWLEKQYIKNRPAEDIIRVIKPLLLSELEKKETLLDPATITGERYLEDVIELMRERVGFEREFVTFSSYFFFEPETYEEDAVKKRWTPDTNSLLDEFLPVLESMPDFTAEAIEAALKEFVAPKGLKAAALIHPLRIVSSGVSFGPSLYHMLEVLGREAVVRRIRKGMAVITLPQQ.

A 'HIGH' region motif is present at residues Pro-30–Gly-40. The 'KMSKS' region motif lies at Lys-277–Arg-281. Position 280 (Lys-280) interacts with ATP.

The protein belongs to the class-I aminoacyl-tRNA synthetase family. Glutamate--tRNA ligase type 1 subfamily. In terms of assembly, monomer.

The protein localises to the cytoplasm. It carries out the reaction tRNA(Glu) + L-glutamate + ATP = L-glutamyl-tRNA(Glu) + AMP + diphosphate. In terms of biological role, catalyzes the attachment of glutamate to tRNA(Glu) in a two-step reaction: glutamate is first activated by ATP to form Glu-AMP and then transferred to the acceptor end of tRNA(Glu). The protein is Glutamate--tRNA ligase of Chlorobium phaeovibrioides (strain DSM 265 / 1930) (Prosthecochloris vibrioformis (strain DSM 265)).